An 885-amino-acid chain; its full sequence is Initiator protein NS1 (885 aa).

The interval 404–477 is disordered; sequence AEAGPSGTQP…GREDIFSGAP (74 aa). The span at 409–423 shows a compositional bias: polar residues; the sequence is SGTQPVETAQQSPPT. Over residues 452–465 the composition is skewed to gly residues; the sequence is QAAGGSEMGAGGSA.

It belongs to the parvoviruses initiator protein NS1 family. In terms of assembly, homooligomer. Mg(2+) serves as cofactor.

The protein resides in the host nucleus. It catalyses the reaction ATP + H2O = ADP + phosphate + H(+). Functionally, multifunctional protein which displays endonuclease and helicase activities required for initiating and directing viral DNA replication. Also plays a role in viral packaging and transactivation of several promoters. Binds site-specifically to 2-3 approximate tandem copies within the origins of replication (Ori), unwinds this hairpin region and nicks one DNA strand thereby initiating the rolling circle replication (RCR). In Bombyx mori densovirus (BmDNV), this protein is Initiator protein NS1.